A 221-amino-acid polypeptide reads, in one-letter code: Lipoprotein-releasing system ATP-binding protein LolD (221 aa).

Residues 8–220 (LKMISKHYKQ…YNLKHGLLNI (213 aa)) enclose the ABC transporter domain. 42 to 49 (GSSGSGKS) lines the ATP pocket.

The protein belongs to the ABC transporter superfamily. Lipoprotein translocase (TC 3.A.1.125) family. The complex is composed of two ATP-binding proteins (LolD) and two transmembrane proteins (LolC and LolE).

The protein resides in the cell inner membrane. Its function is as follows. Part of the ABC transporter complex LolCDE involved in the translocation of mature outer membrane-directed lipoproteins, from the inner membrane to the periplasmic chaperone, LolA. Responsible for the formation of the LolA-lipoprotein complex in an ATP-dependent manner. The sequence is that of Lipoprotein-releasing system ATP-binding protein LolD from Rickettsia prowazekii (strain Madrid E).